Here is a 249-residue protein sequence, read N- to C-terminus: Diaminopimelate epimerase (249 aa).

N11 and N60 together coordinate substrate. C69 acts as the Proton donor in catalysis. Residues 70–71 (GN), N164, and 182–183 (ER) contribute to the substrate site. Residue C192 is the Proton acceptor of the active site. Residue 193–194 (GT) participates in substrate binding.

The protein belongs to the diaminopimelate epimerase family. Homodimer.

The protein resides in the cytoplasm. It catalyses the reaction (2S,6S)-2,6-diaminopimelate = meso-2,6-diaminopimelate. It participates in amino-acid biosynthesis; L-lysine biosynthesis via DAP pathway; DL-2,6-diaminopimelate from LL-2,6-diaminopimelate: step 1/1. Catalyzes the stereoinversion of LL-2,6-diaminopimelate (L,L-DAP) to meso-diaminopimelate (meso-DAP), a precursor of L-lysine and an essential component of the bacterial peptidoglycan. This chain is Diaminopimelate epimerase, found in Campylobacter jejuni subsp. doylei (strain ATCC BAA-1458 / RM4099 / 269.97).